A 1263-amino-acid chain; its full sequence is Histone-lysine N-methyltransferase EHMT2 (1263 aa).

Disordered regions lie at residues 1-314 (MRGL…LEEW) and 332-439 (DERV…EYME). Residues 26-39 (GRGRGGAHRGRGRP) show a composition bias toward basic residues. R40 carries the post-translational modification Asymmetric dimethylarginine. A compositionally biased stretch (basic and acidic residues) spans 83-95 (LEKEPRGAAERVH). At S97 the chain carries Phosphoserine. Position 101 is a phosphothreonine (T101). 2 positions are modified to phosphoserine: S104 and S193. K239 carries the N6,N6,N6-trimethyllysine; by EHMT2; alternate modification. Residue K239 is modified to N6,N6-dimethyllysine; by EHMT2; alternate. Over residues 252 to 270 (PEKRPPEVQHFRMSDDMHL) the composition is skewed to basic and acidic residues. Glycyl lysine isopeptide (Lys-Gly) (interchain with G-Cter in SUMO2) cross-links involve residues K272 and K282. S285, S294, and S298 each carry phosphoserine. Composition is skewed to basic and acidic residues over residues 302 to 312 (ILEKGEPRPLE) and 332 to 343 (DERVDSDSKSEV). Acidic residues predominate over residues 350–380 (LSEEEEEEEEEEEEEEEEEEEEEEEEEDEES). Over residues 391–400 (GRRKAKKKWR) the composition is skewed to basic residues. S403, S465, and S466 each carry phosphoserine. Position 608 is a phosphothreonine (T608). The tract at residues 621–647 (LAHDAPGRADTSQPSARMRGHGEPRRP) is disordered. K687 participates in a covalent cross-link: Glycyl lysine isopeptide (Lys-Gly) (interchain with G-Cter in SUMO2). 7 ANK repeats span residues 702-731 (FHPR…DPNF), 737-766 (SKRT…NINA), 770-799 (QQRT…CVYS), 803-833 (DGST…DVNA), 837-866 (GGWT…DVTL), 870-899 (EENI…DLHA), and 903-932 (HGDT…NPEL). The segment at 870–872 (EEN) is histone H3K9me binding. The 64-residue stretch at 1025–1088 (QHCTCVDDCS…SCKNRVVQSG (64 aa)) folds into the Pre-SET domain. Zn(2+) is bound by residues C1027, C1029, C1033, C1038, C1040, C1070, C1074, C1076, and C1080. The 118-residue stretch at 1091-1208 (VRLQLYRTAK…TGEELGFDYG (118 aa)) folds into the SET domain. Residues 1101–1103 (MGW), Y1138, and 1165–1166 (NH) each bind S-adenosyl-L-methionine. Residues 1127-1146 (DAEADVREDDSYLFDLDNKD) form an interaction with histone H3 region. Residue C1168 coordinates Zn(2+). Positions 1207-1210 (YGDR) are interaction with histone H3. The region spanning 1217 to 1233 (KYFTCQCGSEKCKHSAE) is the Post-SET domain. 3 residues coordinate Zn(2+): C1221, C1223, and C1228. S1257 bears the Phosphoserine mark. T1263 carries the phosphothreonine modification.

This sequence belongs to the class V-like SAM-binding methyltransferase superfamily. Histone-lysine methyltransferase family. Suvar3-9 subfamily. Heterodimer; heterodimerizes with EHMT1/GLP. Interacts with GFI1B and WIZ. Part of the E2F6.com-1 complex in G0 phase composed of E2F6, MGA, MAX, TFDP1, CBX3, BAT8, EHMT1, RING1, RNF2, MBLR, L3MBTL2 and YAF2. Part of a complex composed of TRIM28, HDAC1, HDAC2 and EHMT2. Interacts with UHRF1. Interacts with CDYL. Interacts with REST only in the presence of CDYL. Part of a complex containing at least CDYL, REST, WIZ, SETB1, EHMT1 and EHMT2. Interacts with PRDM9 and CDYL; interaction only takes place when PRDM9 is bound to hotspot DNA. Interacts with SMYD5. Methylated at Lys-239; automethylated. Ubiquitous.

It localises to the nucleus. Its subcellular location is the chromosome. It catalyses the reaction N(6)-methyl-L-lysyl(9)-[histone H3] + S-adenosyl-L-methionine = N(6),N(6)-dimethyl-L-lysyl(9)-[histone H3] + S-adenosyl-L-homocysteine + H(+). It carries out the reaction L-lysyl(9)-[histone H3] + S-adenosyl-L-methionine = N(6)-methyl-L-lysyl(9)-[histone H3] + S-adenosyl-L-homocysteine + H(+). Functionally, histone methyltransferase that specifically mono- and dimethylates 'Lys-9' of histone H3 (H3K9me1 and H3K9me2, respectively) in euchromatin. H3K9me represents a specific tag for epigenetic transcriptional repression by recruiting HP1 proteins to methylated histones. Also mediates monomethylation of 'Lys-56' of histone H3 (H3K56me1) in G1 phase, leading to promote interaction between histone H3 and PCNA and regulating DNA replication. Also weakly methylates 'Lys-27' of histone H3 (H3K27me). Also required for DNA methylation, the histone methyltransferase activity is not required for DNA methylation, suggesting that these 2 activities function independently. Probably targeted to histone H3 by different DNA-binding proteins like E2F6, MGA, MAX and/or DP1. May also methylate histone H1. In addition to the histone methyltransferase activity, also methylates non-histone proteins: mediates dimethylation of 'Lys-373' of p53/TP53. Also methylates CDYL, WIZ, ACIN1, DNMT1, HDAC1, ERCC6, KLF12 and itself. This Mus musculus (Mouse) protein is Histone-lysine N-methyltransferase EHMT2 (Ehmt2).